A 441-amino-acid polypeptide reads, in one-letter code: Probable glycine dehydrogenase (decarboxylating) subunit 1 (441 aa).

It belongs to the GcvP family. N-terminal subunit subfamily. The glycine cleavage system is composed of four proteins: P, T, L and H. In this organism, the P 'protein' is a heterodimer of two subunits.

The enzyme catalyses N(6)-[(R)-lipoyl]-L-lysyl-[glycine-cleavage complex H protein] + glycine + H(+) = N(6)-[(R)-S(8)-aminomethyldihydrolipoyl]-L-lysyl-[glycine-cleavage complex H protein] + CO2. The glycine cleavage system catalyzes the degradation of glycine. The P protein binds the alpha-amino group of glycine through its pyridoxal phosphate cofactor; CO(2) is released and the remaining methylamine moiety is then transferred to the lipoamide cofactor of the H protein. The chain is Probable glycine dehydrogenase (decarboxylating) subunit 1 from Halobacterium salinarum (strain ATCC 700922 / JCM 11081 / NRC-1) (Halobacterium halobium).